Reading from the N-terminus, the 259-residue chain is Probable iron export permease protein FetB (259 aa).

Topologically, residues 1-5 (MNSHN) are periplasmic. Residues 6–26 (ITNESLALALMLVVVAILISH) traverse the membrane as a helical segment. Topologically, residues 27–35 (KEKLALEKD) are cytoplasmic. The next 2 membrane-spanning stretches (helical) occupy residues 36-56 (ILWS…VLKY) and 57-77 (IFSV…CFNA). Residues 78–91 (AWNAQKRSKYIAKA) lie on the Cytoplasmic side of the membrane. The chain crosses the membrane as a helical span at residues 92–112 (FISSFIAITVGAGITLAVLIL). Residues 113–117 (SGSIE) lie on the Periplasmic side of the membrane. The helical transmembrane segment at 118 to 138 (FIPMQVIPIAGMIAGNAMVAV) threads the bilayer. Residues 139-191 (GLCYNNLGQRVISEQQQIQEKLSLGATPKQASAILIRDSIRAALIPTVDSAKT) are Cytoplasmic-facing. Residues 192–212 (VGLVSLPGMMSGLIFAGIDPV) form a helical membrane-spanning segment. Over 213–218 (KAIKYQ) the chain is Periplasmic. A helical membrane pass occupies residues 219-239 (IMVTFMLLSTASLSTIIACYL). The Cytoplasmic portion of the chain corresponds to 240–259 (TYRKFYNSRHQLVVTQLKKK).

This sequence belongs to the UPF0014 family. As to quaternary structure, the complex is composed of two ATP-binding proteins (FetA) and two transmembrane proteins (FetB).

The protein resides in the cell inner membrane. Functionally, part of the ABC transporter complex FetAB, which is probably involved in iron export and enhances resistance to H(2)O(2)-mediated oxidative stress. Probably responsible for the translocation of the substrate across the membrane. The sequence is that of Probable iron export permease protein FetB (fetB) from Escherichia coli (strain K12).